The following is a 1361-amino-acid chain: Protein transport protein SEC16B homolog (1361 aa).

At S46 the chain carries Phosphoserine. Disordered stretches follow at residues 82–109, 487–513, 984–1013, 1025–1062, 1163–1204, 1216–1235, and 1306–1361; these read NEGA…HSDA, VDDA…GRPP, PVGG…QEAT, SSLM…GRTP, ENKS…ARGR, NPPG…VQTA, and SVNG…EVEL. Residues 491 to 503 show a composition bias toward low complexity; it reads PQSFQSSQLFSPS. Polar residues predominate over residues 996–1013; that stretch reads TKGNLQGNEYQHQQQEAT. Composition is skewed to polar residues over residues 1169-1200, 1222-1234, and 1308-1325; these read IPSN…NQFS, NSHT…SVQT, and NGDN…SWSG. Residues 1326–1354 are compositionally biased toward low complexity; that stretch reads NFNTSFTPPTSPSTFKPVLLNSSSSSLGE.

It belongs to the SEC16 family.

It is found in the golgi apparatus. It localises to the endoplasmic reticulum. Required for protein transport from the endoplasmic reticulum to the Golgi apparatus. This chain is Protein transport protein SEC16B homolog, found in Arabidopsis thaliana (Mouse-ear cress).